A 227-amino-acid polypeptide reads, in one-letter code: Cytochrome c oxidase subunit 2 (227 aa).

At 1–14 the chain is on the mitochondrial intermembrane side; that stretch reads MAYPFQLGFQDATS. The helical transmembrane segment at 15–45 threads the bilayer; that stretch reads PIMEELLHFHDHTLMIVFLISSLVLYIISLM. At 46 to 59 the chain is on the mitochondrial matrix side; it reads LTTKLTHTSTMDAQ. A helical membrane pass occupies residues 60-87; sequence EVETIWTILPAIILILIALPSLRILYMM. The Mitochondrial intermembrane segment spans residues 88–227; that stretch reads DEINNPSLTV…HFEKWSASML (140 aa). Cu cation-binding residues include histidine 161, cysteine 196, glutamate 198, cysteine 200, histidine 204, and methionine 207. Mg(2+) is bound at residue glutamate 198.

This sequence belongs to the cytochrome c oxidase subunit 2 family. As to quaternary structure, component of the cytochrome c oxidase (complex IV, CIV), a multisubunit enzyme composed of 14 subunits. The complex is composed of a catalytic core of 3 subunits MT-CO1, MT-CO2 and MT-CO3, encoded in the mitochondrial DNA, and 11 supernumerary subunits COX4I, COX5A, COX5B, COX6A, COX6B, COX6C, COX7A, COX7B, COX7C, COX8 and NDUFA4, which are encoded in the nuclear genome. The complex exists as a monomer or a dimer and forms supercomplexes (SCs) in the inner mitochondrial membrane with NADH-ubiquinone oxidoreductase (complex I, CI) and ubiquinol-cytochrome c oxidoreductase (cytochrome b-c1 complex, complex III, CIII), resulting in different assemblies (supercomplex SCI(1)III(2)IV(1) and megacomplex MCI(2)III(2)IV(2)). Found in a complex with TMEM177, COA6, COX18, COX20, SCO1 and SCO2. Interacts with TMEM177 in a COX20-dependent manner. Interacts with COX20. Interacts with COX16. Requires Cu cation as cofactor.

It is found in the mitochondrion inner membrane. The catalysed reaction is 4 Fe(II)-[cytochrome c] + O2 + 8 H(+)(in) = 4 Fe(III)-[cytochrome c] + 2 H2O + 4 H(+)(out). Component of the cytochrome c oxidase, the last enzyme in the mitochondrial electron transport chain which drives oxidative phosphorylation. The respiratory chain contains 3 multisubunit complexes succinate dehydrogenase (complex II, CII), ubiquinol-cytochrome c oxidoreductase (cytochrome b-c1 complex, complex III, CIII) and cytochrome c oxidase (complex IV, CIV), that cooperate to transfer electrons derived from NADH and succinate to molecular oxygen, creating an electrochemical gradient over the inner membrane that drives transmembrane transport and the ATP synthase. Cytochrome c oxidase is the component of the respiratory chain that catalyzes the reduction of oxygen to water. Electrons originating from reduced cytochrome c in the intermembrane space (IMS) are transferred via the dinuclear copper A center (CU(A)) of subunit 2 and heme A of subunit 1 to the active site in subunit 1, a binuclear center (BNC) formed by heme A3 and copper B (CU(B)). The BNC reduces molecular oxygen to 2 water molecules using 4 electrons from cytochrome c in the IMS and 4 protons from the mitochondrial matrix. This is Cytochrome c oxidase subunit 2 (MT-CO2) from Ceratotherium simum (White rhinoceros).